The primary structure comprises 255 residues: Urease accessory protein UreD 1 (255 aa).

This sequence belongs to the UreD family. As to quaternary structure, ureD, UreF and UreG form a complex that acts as a GTP-hydrolysis-dependent molecular chaperone, activating the urease apoprotein by helping to assemble the nickel containing metallocenter of UreC. The UreE protein probably delivers the nickel.

The protein resides in the cytoplasm. In terms of biological role, required for maturation of urease via the functional incorporation of the urease nickel metallocenter. The sequence is that of Urease accessory protein UreD 1 from Streptomyces griseus subsp. griseus (strain JCM 4626 / CBS 651.72 / NBRC 13350 / KCC S-0626 / ISP 5235).